We begin with the raw amino-acid sequence, 404 residues long: Probable tRNA sulfurtransferase (404 aa).

One can recognise a THUMP domain in the interval Gln60–Glu165. Residues Met183 to Leu184, His208 to Phe209, Arg265, Gly287, and Gln296 contribute to the ATP site.

The protein belongs to the ThiI family.

It is found in the cytoplasm. It catalyses the reaction [ThiI sulfur-carrier protein]-S-sulfanyl-L-cysteine + a uridine in tRNA + 2 reduced [2Fe-2S]-[ferredoxin] + ATP + H(+) = [ThiI sulfur-carrier protein]-L-cysteine + a 4-thiouridine in tRNA + 2 oxidized [2Fe-2S]-[ferredoxin] + AMP + diphosphate. The catalysed reaction is [ThiS sulfur-carrier protein]-C-terminal Gly-Gly-AMP + S-sulfanyl-L-cysteinyl-[cysteine desulfurase] + AH2 = [ThiS sulfur-carrier protein]-C-terminal-Gly-aminoethanethioate + L-cysteinyl-[cysteine desulfurase] + A + AMP + 2 H(+). The protein operates within cofactor biosynthesis; thiamine diphosphate biosynthesis. In terms of biological role, catalyzes the ATP-dependent transfer of a sulfur to tRNA to produce 4-thiouridine in position 8 of tRNAs, which functions as a near-UV photosensor. Also catalyzes the transfer of sulfur to the sulfur carrier protein ThiS, forming ThiS-thiocarboxylate. This is a step in the synthesis of thiazole, in the thiamine biosynthesis pathway. The sulfur is donated as persulfide by IscS. The protein is Probable tRNA sulfurtransferase of Streptococcus pyogenes serotype M1.